The following is a 121-amino-acid chain: NAD(P)H-quinone oxidoreductase subunit 3, chloroplastic (121 aa).

Helical transmembrane passes span 10–30 (FWAFLLIACLIPVLAISVSNL), 65–85 (MFALVFVIFDVETVFLYPWAM), and 90–110 (LGIIAFAEVLVFVIILIIGLI).

This sequence belongs to the complex I subunit 3 family. As to quaternary structure, NDH is composed of at least 16 different subunits, 5 of which are encoded in the nucleus.

It is found in the plastid. It localises to the chloroplast thylakoid membrane. The enzyme catalyses a plastoquinone + NADH + (n+1) H(+)(in) = a plastoquinol + NAD(+) + n H(+)(out). The catalysed reaction is a plastoquinone + NADPH + (n+1) H(+)(in) = a plastoquinol + NADP(+) + n H(+)(out). NDH shuttles electrons from NAD(P)H:plastoquinone, via FMN and iron-sulfur (Fe-S) centers, to quinones in the photosynthetic chain and possibly in a chloroplast respiratory chain. The immediate electron acceptor for the enzyme in this species is believed to be plastoquinone. Couples the redox reaction to proton translocation, and thus conserves the redox energy in a proton gradient. This is NAD(P)H-quinone oxidoreductase subunit 3, chloroplastic from Staurastrum punctulatum (Green alga).